The following is a 110-amino-acid chain: MALWMRLLPLLALLALWGPDPAAAFVNQHLCGSHLVEALYLVCGERGFFYTPKTRREAEDLQVGQVELGGGPGAGSLQPLALEGSLQKRGIVEQCCTSICSLYQLENYCN.

An N-terminal signal peptide occupies residues 1–24; it reads MALWMRLLPLLALLALWGPDPAAA. 3 disulfide bridges follow: cysteine 31–cysteine 96, cysteine 43–cysteine 109, and cysteine 95–cysteine 100. Residues 57–87 constitute a propeptide, c peptide; that stretch reads EAEDLQVGQVELGGGPGAGSLQPLALEGSLQ.

The protein belongs to the insulin family. In terms of assembly, heterodimer of a B chain and an A chain linked by two disulfide bonds.

It localises to the secreted. In terms of biological role, insulin decreases blood glucose concentration. It increases cell permeability to monosaccharides, amino acids and fatty acids. It accelerates glycolysis, the pentose phosphate cycle, and glycogen synthesis in liver. The chain is Insulin (INS) from Gorilla gorilla gorilla (Western lowland gorilla).